The chain runs to 288 residues: UTP--glucose-1-phosphate uridylyltransferase (288 aa).

It belongs to the UDPGP type 2 family.

It carries out the reaction alpha-D-glucose 1-phosphate + UTP + H(+) = UDP-alpha-D-glucose + diphosphate. Its pathway is glycolipid metabolism; diglucosyl-diacylglycerol biosynthesis. Its function is as follows. Catalyzes the formation of UDP-glucose from glucose-1-phosphate and UTP. This is an intermediate step in the biosynthesis of diglucosyl-diacylglycerol (Glc2-DAG), i.e. the predominant glycolipid found in the S.aureus membrane, which is also used as a membrane anchor for lipoteichoic acid (LTA). This chain is UTP--glucose-1-phosphate uridylyltransferase (gtaB), found in Staphylococcus aureus (strain MRSA252).